Consider the following 232-residue polypeptide: MAALPARAVLVDIEGTTTDVRFVHDTLFSVARRDLAAYVSAHAGGPEVEAARRAVARERGESEQAVSDGELAAALLAWIDQDRKETTLKALQGKIWRSAYESGGLRSHVYADVEPALRRWRDLGVTLAVFSSGSVEAQQLLFRHTTSGDLTGLFTAFFDTTTGPKREAGAYQRIAEALGLQPGEVLFLSDIVAELDAAAAAGMRTVQLLRPGTARDAESRHAVAERFDDIAP.

It belongs to the HAD-like hydrolase superfamily. MasA/MtnC family. In terms of assembly, monomer. Mg(2+) is required as a cofactor.

It catalyses the reaction 5-methylsulfanyl-2,3-dioxopentyl phosphate + H2O = 1,2-dihydroxy-5-(methylsulfanyl)pent-1-en-3-one + phosphate. It participates in amino-acid biosynthesis; L-methionine biosynthesis via salvage pathway; L-methionine from S-methyl-5-thio-alpha-D-ribose 1-phosphate: step 3/6. It functions in the pathway amino-acid biosynthesis; L-methionine biosynthesis via salvage pathway; L-methionine from S-methyl-5-thio-alpha-D-ribose 1-phosphate: step 4/6. In terms of biological role, bifunctional enzyme that catalyzes the enolization of 2,3-diketo-5-methylthiopentyl-1-phosphate (DK-MTP-1-P) into the intermediate 2-hydroxy-3-keto-5-methylthiopentenyl-1-phosphate (HK-MTPenyl-1-P), which is then dephosphorylated to form the acireductone 1,2-dihydroxy-3-keto-5-methylthiopentene (DHK-MTPene). The sequence is that of Enolase-phosphatase E1 from Sorangium cellulosum (strain So ce56) (Polyangium cellulosum (strain So ce56)).